The primary structure comprises 556 residues: 2-succinyl-5-enolpyruvyl-6-hydroxy-3-cyclohexene-1-carboxylate synthase (556 aa).

The protein belongs to the TPP enzyme family. MenD subfamily. Homodimer. Requires Mg(2+) as cofactor. It depends on Mn(2+) as a cofactor. Thiamine diphosphate is required as a cofactor.

It carries out the reaction isochorismate + 2-oxoglutarate + H(+) = 5-enolpyruvoyl-6-hydroxy-2-succinyl-cyclohex-3-ene-1-carboxylate + CO2. The protein operates within quinol/quinone metabolism; 1,4-dihydroxy-2-naphthoate biosynthesis; 1,4-dihydroxy-2-naphthoate from chorismate: step 2/7. It participates in quinol/quinone metabolism; menaquinone biosynthesis. In terms of biological role, catalyzes the thiamine diphosphate-dependent decarboxylation of 2-oxoglutarate and the subsequent addition of the resulting succinic semialdehyde-thiamine pyrophosphate anion to isochorismate to yield 2-succinyl-5-enolpyruvyl-6-hydroxy-3-cyclohexene-1-carboxylate (SEPHCHC). The polypeptide is 2-succinyl-5-enolpyruvyl-6-hydroxy-3-cyclohexene-1-carboxylate synthase (Staphylococcus epidermidis (strain ATCC 12228 / FDA PCI 1200)).